The chain runs to 630 residues: Transposase B from transposon Tn554 (630 aa).

The 87-residue stretch at 216–302 folds into the Core-binding (CB) domain; the sequence is TYFKQLVKRY…ILEGLFSTLL (87 aa). Positions 326–513 constitute a Tyr recombinase domain; the sequence is AKPRFIDEFV…FDETLKNEFT (188 aa). Active-site residues include Arg363, Lys391, His465, Arg468, and His491. The active-site O-(3'-phospho-DNA)-tyrosine intermediate is the Tyr500.

Belongs to the 'phage' integrase family.

Functionally, one of three proteins encoded by transposon Tn554 required for its transposition. This chain is Transposase B from transposon Tn554 (tnpB1), found in Staphylococcus aureus (strain Mu50 / ATCC 700699).